We begin with the raw amino-acid sequence, 342 residues long: L-threonine 3-dehydrogenase (342 aa).

Cys38 contributes to the Zn(2+) binding site. Active-site charge relay system residues include Thr40 and His43. 6 residues coordinate Zn(2+): His63, Glu64, Cys93, Cys96, Cys99, and Cys107. Residues Ile175, Asp195, Arg200, 262–264 (LGI), and 286–287 (IY) contribute to the NAD(+) site.

This sequence belongs to the zinc-containing alcohol dehydrogenase family. In terms of assembly, homotetramer. Requires Zn(2+) as cofactor.

Its subcellular location is the cytoplasm. It carries out the reaction L-threonine + NAD(+) = (2S)-2-amino-3-oxobutanoate + NADH + H(+). It functions in the pathway amino-acid degradation; L-threonine degradation via oxydo-reductase pathway; glycine from L-threonine: step 1/2. Its function is as follows. Catalyzes the NAD(+)-dependent oxidation of L-threonine to 2-amino-3-ketobutyrate. This chain is L-threonine 3-dehydrogenase, found in Burkholderia cenocepacia (strain HI2424).